The chain runs to 436 residues: Probable glucose-6-phosphate isomerase (436 aa).

The active-site Proton donor is the glutamate 272. Active-site residues include histidine 293 and lysine 404.

It belongs to the GPI family.

The protein resides in the cytoplasm. The enzyme catalyses alpha-D-glucose 6-phosphate = beta-D-fructose 6-phosphate. The protein operates within carbohydrate biosynthesis; gluconeogenesis. It participates in carbohydrate degradation; glycolysis; D-glyceraldehyde 3-phosphate and glycerone phosphate from D-glucose: step 2/4. Its function is as follows. Catalyzes the reversible isomerization of glucose-6-phosphate to fructose-6-phosphate. The chain is Probable glucose-6-phosphate isomerase from Haloarcula marismortui (strain ATCC 43049 / DSM 3752 / JCM 8966 / VKM B-1809) (Halobacterium marismortui).